The sequence spans 742 residues: Polyphosphate kinase (742 aa).

Asn91 is an ATP binding site. Mg(2+) is bound by residues Arg431 and Arg461. The Phosphohistidine intermediate role is filled by His491. Residues Tyr524, Arg624, and His652 each contribute to the ATP site. Residues 718-742 are disordered; sequence WTASPQEGHSVRDHQESLMERHRSP. Basic and acidic residues predominate over residues 726-742; the sequence is HSVRDHQESLMERHRSP.

This sequence belongs to the polyphosphate kinase 1 (PPK1) family. Requires Mg(2+) as cofactor. In terms of processing, an intermediate of this reaction is the autophosphorylated ppk in which a phosphate is covalently linked to a histidine residue through a N-P bond.

It catalyses the reaction [phosphate](n) + ATP = [phosphate](n+1) + ADP. Its function is as follows. Catalyzes the reversible transfer of the terminal phosphate of ATP to form a long-chain polyphosphate (polyP). This Mycobacterium bovis (strain ATCC BAA-935 / AF2122/97) protein is Polyphosphate kinase.